A 229-amino-acid chain; its full sequence is MGDKIWLPFPVLLLAALPPVLLPGAAGFTPSLDSDFTFTLPAGQKECFYQPMPLKASLEIEYQVLDGAGLDIDFHLASPEGKTLVFEQRKSDGVHTVETEVGDYMFCFDNTFSTISEKVIFFELILDNMGEQAQEQEDWKKYITGTDILDMKLEDILESINSIKSRLSKSGHIQTLLRAFEARDRNIQESNFDRVNFWSMVNLVVMVVVSAIQVYMLKSLFEDKRKSRT.

The first 27 residues, 1–27 (MGDKIWLPFPVLLLAALPPVLLPGAAG), serve as a signal peptide directing secretion. Topologically, residues 28-196 (FTPSLDSDFT…IQESNFDRVN (169 aa)) are lumenal. Residues 45-126 (KECFYQPMPL…EKVIFFELIL (82 aa)) enclose the GOLD domain. A helical membrane pass occupies residues 197–217 (FWSMVNLVVMVVVSAIQVYML). At 218-229 (KSLFEDKRKSRT) the chain is on the cytoplasmic side.

It belongs to the EMP24/GP25L family. As to quaternary structure, interacts with TMED9 and TMED10.

The protein resides in the endoplasmic reticulum membrane. Its subcellular location is the golgi apparatus. The protein localises to the cis-Golgi network membrane. It localises to the endoplasmic reticulum-Golgi intermediate compartment membrane. Functionally, potential role in vesicular protein trafficking, mainly in the early secretory pathway. Required for the maintenance of the Golgi apparatus; involved in protein exchange between Golgi stacks during assembly. Probably not required for COPI-vesicle-mediated retrograde transport. This chain is Transmembrane emp24 domain-containing protein 5 (TMED5), found in Homo sapiens (Human).